The following is a 411-amino-acid chain: Alpha-N-acetylgalactosaminidase (411 aa).

Residues 1-17 form the signal peptide; it reads MLLKTVLLLGHVAQVLM. Intrachain disulfides connect Cys38-Cys80 and Cys42-Cys49. 78–79 is a substrate binding site; it reads DD. An N-linked (GlcNAc...) asparagine glycan is attached at Asn124. An intrachain disulfide couples Cys127 to Cys158. Residue Lys154 participates in substrate binding. Residue Asp156 is the Nucleophile of the active site. The N-linked (GlcNAc...) asparagine glycan is linked to Asn177. The cysteines at positions 187 and 209 are disulfide-linked. Ser188 lines the substrate pocket. Residue Asn201 is glycosylated (N-linked (GlcNAc...) asparagine). 2 residues coordinate substrate: Arg213 and Asp217. Residue Asp217 is the Proton donor of the active site. Ser322 and Ser332 each carry phosphoserine. Asn359 and Asn385 each carry an N-linked (GlcNAc...) asparagine glycan.

This sequence belongs to the glycosyl hydrolase 27 family. Homodimer.

Its subcellular location is the lysosome. It catalyses the reaction Cleavage of non-reducing alpha-(1-&gt;3)-N-acetylgalactosamine residues from human blood group A and AB mucin glycoproteins, Forssman hapten and blood group A lacto series glycolipids.. It carries out the reaction a neolactoside IV(3)-alpha-GalNAc,IV(2)-alpha-Fuc-nLc4Cer(d18:1(4E)) + H2O = a neolactoside IV(2)-alpha-Fuc-nLc4Cer(d18:1(4E)) + N-acetyl-alpha-D-galactosamine. The enzyme catalyses a neolactoside IV(3)-alpha-GalNAc,IV(2)-alpha-Fuc-nLc4Cer(d18:0) + H2O = a neolactoside IV(2)-alpha-Fuc-nLc4Cer(d18:0) + N-acetyl-alpha-D-galactosamine. The catalysed reaction is a globoside IV3GalNAc-Gb4Cer + H2O = N-acetyl-alpha-D-galactosamine + a globoside Gb4Cer. In terms of biological role, removes terminal alpha-N-acetylgalactosamine residues from glycolipids and glycopeptides. Required for the breakdown of glycolipids. The chain is Alpha-N-acetylgalactosaminidase from Homo sapiens (Human).